The following is a 192-amino-acid chain: FMN-dependent NADH:quinone oxidoreductase 1 (192 aa).

FMN is bound by residues serine 9 and 15–17; that span reads SYS.

The protein belongs to the azoreductase type 1 family. Homodimer. It depends on FMN as a cofactor.

The enzyme catalyses 2 a quinone + NADH + H(+) = 2 a 1,4-benzosemiquinone + NAD(+). The catalysed reaction is N,N-dimethyl-1,4-phenylenediamine + anthranilate + 2 NAD(+) = 2-(4-dimethylaminophenyl)diazenylbenzoate + 2 NADH + 2 H(+). Its function is as follows. Quinone reductase that provides resistance to thiol-specific stress caused by electrophilic quinones. Functionally, also exhibits azoreductase activity. Catalyzes the reductive cleavage of the azo bond in aromatic azo compounds to the corresponding amines. The protein is FMN-dependent NADH:quinone oxidoreductase 1 of Colwellia psychrerythraea (strain 34H / ATCC BAA-681) (Vibrio psychroerythus).